The sequence spans 134 residues: MMSTLALVSLAIFGIAVVCAAPKPATVPVANEEDYLAALYGFEAPGSQFKGAPLQSKRHISPSYDVEIDAGNMRNLLDIGKRSAPMASDYGNQFQMYNRLIDAGKKKRSPAISPAYQFENAFGLSEALERAGRR.

The first 20 residues, 1 to 20 (MMSTLALVSLAIFGIAVVCA), serve as a signal peptide directing secretion. The propeptide occupies 21 to 106 (APKPATVPVA…YNRLIDAGKK (86 aa)). Ala-131 is subject to Alanine amide.

The chain is Neuropeptide-like peptide 11 (nlp-11) from Caenorhabditis elegans.